The sequence spans 247 residues: Probable enoyl-CoA hydratase echA6 (247 aa).

This sequence belongs to the enoyl-CoA hydratase/isomerase family.

The enzyme catalyses a (3S)-3-hydroxyacyl-CoA = a (2E)-enoyl-CoA + H2O. It catalyses the reaction a 4-saturated-(3S)-3-hydroxyacyl-CoA = a (3E)-enoyl-CoA + H2O. Could possibly oxidize fatty acids using specific components. This Mycobacterium leprae (strain TN) protein is Probable enoyl-CoA hydratase echA6 (echA6).